Here is a 150-residue protein sequence, read N- to C-terminus: 6,7-dimethyl-8-ribityllumazine synthase (150 aa).

Residues F11, 43–45 (TYE), and 67–69 (AVI) contribute to the 5-amino-6-(D-ribitylamino)uracil site. 72–73 (AT) lines the (2S)-2-hydroxy-3-oxobutyl phosphate pocket. H75 serves as the catalytic Proton donor. Position 100 (L100) interacts with 5-amino-6-(D-ribitylamino)uracil. R115 is a binding site for (2S)-2-hydroxy-3-oxobutyl phosphate.

This sequence belongs to the DMRL synthase family.

The catalysed reaction is (2S)-2-hydroxy-3-oxobutyl phosphate + 5-amino-6-(D-ribitylamino)uracil = 6,7-dimethyl-8-(1-D-ribityl)lumazine + phosphate + 2 H2O + H(+). It functions in the pathway cofactor biosynthesis; riboflavin biosynthesis; riboflavin from 2-hydroxy-3-oxobutyl phosphate and 5-amino-6-(D-ribitylamino)uracil: step 1/2. Functionally, catalyzes the formation of 6,7-dimethyl-8-ribityllumazine by condensation of 5-amino-6-(D-ribitylamino)uracil with 3,4-dihydroxy-2-butanone 4-phosphate. This is the penultimate step in the biosynthesis of riboflavin. The polypeptide is 6,7-dimethyl-8-ribityllumazine synthase (Staphylothermus marinus (strain ATCC 43588 / DSM 3639 / JCM 9404 / F1)).